Here is a 375-residue protein sequence, read N- to C-terminus: Serpin B5 (375 aa).

5 N-linked (GlcNAc...) asparagine glycosylation sites follow: Asn-99, Asn-133, Asn-155, Asn-188, and Asn-361.

This sequence belongs to the serpin family. Ov-serpin subfamily. As to quaternary structure, interacts with IRF6.

It is found in the secreted. Its subcellular location is the extracellular space. In terms of biological role, tumor suppressor. It blocks the growth, invasion, and metastatic properties of mammary tumors. As it does not undergo the S (stressed) to R (relaxed) conformational transition characteristic of active serpins, it exhibits no serine protease inhibitory activity. The polypeptide is Serpin B5 (SERPINB5) (Plecturocebus moloch (Dusky titi monkey)).